Here is a 206-residue protein sequence, read N- to C-terminus: FMN-dependent NADH:quinone oxidoreductase (206 aa).

Residues Ser-10 and 15–17 (SVS) each bind FMN.

Belongs to the azoreductase type 1 family. Homodimer. FMN serves as cofactor.

It carries out the reaction 2 a quinone + NADH + H(+) = 2 a 1,4-benzosemiquinone + NAD(+). The enzyme catalyses N,N-dimethyl-1,4-phenylenediamine + anthranilate + 2 NAD(+) = 2-(4-dimethylaminophenyl)diazenylbenzoate + 2 NADH + 2 H(+). Quinone reductase that provides resistance to thiol-specific stress caused by electrophilic quinones. Functionally, also exhibits azoreductase activity. Catalyzes the reductive cleavage of the azo bond in aromatic azo compounds to the corresponding amines. In Acidobacterium capsulatum (strain ATCC 51196 / DSM 11244 / BCRC 80197 / JCM 7670 / NBRC 15755 / NCIMB 13165 / 161), this protein is FMN-dependent NADH:quinone oxidoreductase.